The following is a 292-amino-acid chain: 33 kDa chaperonin (292 aa).

2 disulfide bridges follow: Cys-236–Cys-238 and Cys-269–Cys-272.

Belongs to the HSP33 family. Under oxidizing conditions two disulfide bonds are formed involving the reactive cysteines. Under reducing conditions zinc is bound to the reactive cysteines and the protein is inactive.

It localises to the cytoplasm. Redox regulated molecular chaperone. Protects both thermally unfolding and oxidatively damaged proteins from irreversible aggregation. Plays an important role in the bacterial defense system toward oxidative stress. The polypeptide is 33 kDa chaperonin (Ruminiclostridium cellulolyticum (strain ATCC 35319 / DSM 5812 / JCM 6584 / H10) (Clostridium cellulolyticum)).